The following is a 512-amino-acid chain: Capsid scaffolding protein (512 aa).

Active-site charge relay system residues include His47, Ser115, and His131. An interaction with pAP region spans residues 264–282 (DLISTICSTTHTTHHDLVR). Residues 376-407 (RGSQKRCAPTDSDDEMSFPGDPDYTTKKKKRY) form a disordered region. Positions 402–408 (KKKKRYR) match the Nuclear localization signal motif. The interaction with major capsid protein stretch occupies residues 492–512 (DQSLLSLNKKLFVEALNKMDN).

This sequence belongs to the herpesviridae capsid scaffolding protein family. In terms of assembly, homomultimer. Interacts with major capsid protein. As to quaternary structure, exists in a monomer-dimer equilibrium with the dimer being the active species. In terms of processing, capsid scaffolding protein is cleaved by assemblin after formation of the spherical procapsid. As a result, the capsid obtains its mature, icosahedral shape. Cleavages occur at two or more sites: release (R-site) and maturation (M-site).

The protein resides in the host cytoplasm. Its subcellular location is the host nucleus. It carries out the reaction Cleaves -Ala-|-Ser- and -Ala-|-Ala- bonds in the scaffold protein.. Its function is as follows. Acts as a scaffold protein by binding major capsid protein in the cytoplasm, inducing the nuclear localization of both proteins. Multimerizes in the nucleus such as major capsid protein forms the icosahedral T=16 capsid. Autocatalytic cleavage releases the assembly protein, and subsequently abolishes interaction with major capsid protein. Cleavages products are evicted from the capsid before or during DNA packaging. Protease that plays an essential role in virion assembly within the nucleus. Catalyzes the cleavage of the assembly protein after formation of the spherical procapsid. By that cleavage, the capsid matures and gains its icosahedral shape. The cleavage sites seem to include -Ala-Ser-, -Ala-Ala-, as well as Ala-Thr bonds. Assemblin and cleavages products are evicted from the capsid before or during DNA packaging. In terms of biological role, plays a major role in capsid assembly. Acts as a scaffold protein by binding major capsid protein. Multimerizes in the nucleus such as major capsid protein forms the icosahedral T=16 capsid. Cleaved by assemblin after capsid completion. The cleavages products are evicted from the capsid before or during DNA packaging. The chain is Capsid scaffolding protein (U53) from Human herpesvirus 7 (strain JI) (HHV-7).